The following is a 445-amino-acid chain: Tubulin beta-3 chain (445 aa).

The MREI motif signature appears at 1-4 (MREI). 8 residues coordinate GTP: Gln11, Glu69, Ser138, Gly142, Thr143, Gly144, Asn204, and Asn226. Position 69 (Glu69) interacts with Mg(2+). Residues 425–445 (YQDATAEEEGEFEEEAEEEAE) are disordered. Positions 429-445 (TAEEEGEFEEEAEEEAE) are enriched in acidic residues. Glu438 is modified (5-glutamyl polyglutamate).

The protein belongs to the tubulin family. As to quaternary structure, dimer of alpha and beta chains. A typical microtubule is a hollow water-filled tube with an outer diameter of 25 nm and an inner diameter of 15 nM. Alpha-beta heterodimers associate head-to-tail to form protofilaments running lengthwise along the microtubule wall with the beta-tubulin subunit facing the microtubule plus end conferring a structural polarity. Microtubules usually have 13 protofilaments but different protofilament numbers can be found in some organisms and specialized cells. It depends on Mg(2+) as a cofactor. Post-translationally, some glutamate residues at the C-terminus are polyglycylated, resulting in polyglycine chains on the gamma-carboxyl group. Glycylation is mainly limited to tubulin incorporated into axonemes (cilia and flagella) whereas glutamylation is prevalent in neuronal cells, centrioles, axonemes, and the mitotic spindle. Both modifications can coexist on the same protein on adjacent residues, and lowering polyglycylation levels increases polyglutamylation, and reciprocally. The precise function of polyglycylation is still unclear. In terms of processing, some glutamate residues at the C-terminus are polyglutamylated, resulting in polyglutamate chains on the gamma-carboxyl group. Polyglutamylation plays a key role in microtubule severing by spastin (SPAST). SPAST preferentially recognizes and acts on microtubules decorated with short polyglutamate tails: severing activity by SPAST increases as the number of glutamates per tubulin rises from one to eight, but decreases beyond this glutamylation threshold. Highly expressed in testis.

The protein localises to the cytoplasm. Its subcellular location is the cytoskeleton. In terms of biological role, tubulin is the major constituent of microtubules, a cylinder consisting of laterally associated linear protofilaments composed of alpha- and beta-tubulin heterodimers. Microtubules grow by the addition of GTP-tubulin dimers to the microtubule end, where a stabilizing cap forms. Below the cap, tubulin dimers are in GDP-bound state, owing to GTPase activity of alpha-tubulin. TUBB3 plays a role in dorsal root ganglion axon projection towards the spinal cord. The chain is Tubulin beta-3 chain from Gallus gallus (Chicken).